Here is a 79-residue protein sequence, read N- to C-terminus: MNPESKLSQRIAEERAKFFQNMKHNGIEDEVFLNWFWNNKYAACEGALSLSVAMMYEGWKGAKKFSLRASAFLDNKILT.

This is an uncharacterized protein from Escherichia coli (Bacteriophage T4).